The chain runs to 509 residues: Protein root UVB sensitive 5 (509 aa).

A disordered region spans residues 22–49 (CQPKRRRVEHLRCSAQPSSIREDDEDAD).

This sequence belongs to the RUS1 family.

This is Protein root UVB sensitive 5 from Arabidopsis thaliana (Mouse-ear cress).